The primary structure comprises 633 residues: Glutamyl-tRNA(Gln) amidotransferase subunit E (633 aa).

The tract at residues 415–437 (LDDGTTKFLRPQPGSARMYPETD) is disordered.

It belongs to the GatB/GatE family. GatE subfamily. As to quaternary structure, heterodimer of GatD and GatE.

The enzyme catalyses L-glutamyl-tRNA(Gln) + L-glutamine + ATP + H2O = L-glutaminyl-tRNA(Gln) + L-glutamate + ADP + phosphate + H(+). Its function is as follows. Allows the formation of correctly charged Gln-tRNA(Gln) through the transamidation of misacylated Glu-tRNA(Gln) in organisms which lack glutaminyl-tRNA synthetase. The reaction takes place in the presence of glutamine and ATP through an activated gamma-phospho-Glu-tRNA(Gln). The GatDE system is specific for glutamate and does not act on aspartate. The sequence is that of Glutamyl-tRNA(Gln) amidotransferase subunit E from Saccharolobus solfataricus (strain ATCC 35092 / DSM 1617 / JCM 11322 / P2) (Sulfolobus solfataricus).